We begin with the raw amino-acid sequence, 468 residues long: uncharacterized protein (468 aa).

Residues 447-468 (AVHVSNGDKPKVALPDTQLGSH) are disordered.

Belongs to the mycobacterial PPE family.

This is an uncharacterized protein from Mycobacterium tuberculosis (strain CDC 1551 / Oshkosh).